A 446-amino-acid polypeptide reads, in one-letter code: Chromosomal replication initiator protein DnaA (446 aa).

Residues 1-81 (MENISDLWNS…AKLAIRFIIP (81 aa)) form a domain I, interacts with DnaA modulators region. Residues 81-109 (PQSQAEEDIDLPSVKQKHAHDESNHLPQS) are domain II. The domain III, AAA+ region stretch occupies residues 110–326 (MLNPKYTFDT…GALIRVVAYS (217 aa)). Gly154, Gly156, Lys157, and Thr158 together coordinate ATP. The tract at residues 327-446 (SLINKDMNAD…HVEEVKDILK (120 aa)) is domain IV, binds dsDNA.

The protein belongs to the DnaA family. In terms of assembly, oligomerizes as a right-handed, spiral filament on DNA at oriC.

The protein resides in the cytoplasm. Functionally, plays an essential role in the initiation and regulation of chromosomal replication. ATP-DnaA binds to the origin of replication (oriC) to initiate formation of the DNA replication initiation complex once per cell cycle. Binds the DnaA box (a 9 base pair repeat at the origin) and separates the double-stranded (ds)DNA. Forms a right-handed helical filament on oriC DNA; dsDNA binds to the exterior of the filament while single-stranded (ss)DNA is stabiized in the filament's interior. The ATP-DnaA-oriC complex binds and stabilizes one strand of the AT-rich DNA unwinding element (DUE), permitting loading of DNA polymerase. After initiation quickly degrades to an ADP-DnaA complex that is not apt for DNA replication. Binds acidic phospholipids. This Bacillus mycoides (strain KBAB4) (Bacillus weihenstephanensis) protein is Chromosomal replication initiator protein DnaA.